A 251-amino-acid polypeptide reads, in one-letter code: MKKAGLLFLVMIVIAVVAAGIGYWKLTGEESDTLRKIVLEECLPNQQQNQNPSPCAEVKPNAGYVVLKDLNGPLQYLLMPTYRINGTESPLLTDPSTPNFFWLAWQARDFMSKKYGQPVPDRAVSLAINSRTGRTQNHFHIHISCIRPDVREQLDNNLANISSRWLPLPGGLRGHEYLARRVTESELVQRSPFIMLAEEVPEAREHMGSYGLAMVRQSDNSFVLLATQRNLLTLNRASAEEIQDHQCEILR.

Residues Ala-4–Trp-24 form a helical membrane-spanning segment.

It belongs to the Cdh family.

Its subcellular location is the cell inner membrane. The catalysed reaction is a CDP-1,2-diacyl-sn-glycerol + H2O = a 1,2-diacyl-sn-glycero-3-phosphate + CMP + 2 H(+). Its pathway is phospholipid metabolism; CDP-diacylglycerol degradation; phosphatidate from CDP-diacylglycerol: step 1/1. The chain is CDP-diacylglycerol pyrophosphatase from Escherichia coli (strain ATCC 8739 / DSM 1576 / NBRC 3972 / NCIMB 8545 / WDCM 00012 / Crooks).